The sequence spans 303 residues: Ribonuclease P protein subunit p40 (303 aa).

In terms of assembly, component of nuclear RNase P and RNase MRP ribonucleoproteins. RNase P consists of a catalytic RNA moiety and about 10 protein subunits; POP1, POP4, POP5, POP7, RPP14, RPP21, RPP25, RPP30, RPP38 and RPP40. Within the RNase P complex, POP1, POP7 and RPP25 form the 'finger' subcomplex, POP5, RPP14, RPP40 and homodimeric RPP30 form the 'palm' subcomplex, and RPP21, POP4 and RPP38 form the 'wrist' subcomplex. All subunits of the RNase P complex interact with the catalytic RNA. Several subunits of RNase P are also part of the RNase MRP complex. RNase MRP consists of a catalytic RNA moiety and about 8 protein subunits; POP1, POP7, RPP25, RPP30, RPP38, RPP40 and possibly also POP4 and POP5.

The protein resides in the nucleus. Its subcellular location is the nucleolus. Component of ribonuclease P, a ribonucleoprotein complex that generates mature tRNA molecules by cleaving their 5'-ends. Also a component of the MRP ribonuclease complex, which cleaves pre-rRNA sequences. This Bos taurus (Bovine) protein is Ribonuclease P protein subunit p40 (RPP40).